The sequence spans 410 residues: Tryptophan synthase beta chain (410 aa).

An N6-(pyridoxal phosphate)lysine modification is found at Lys99.

This sequence belongs to the TrpB family. As to quaternary structure, tetramer of two alpha and two beta chains. The cofactor is pyridoxal 5'-phosphate.

The catalysed reaction is (1S,2R)-1-C-(indol-3-yl)glycerol 3-phosphate + L-serine = D-glyceraldehyde 3-phosphate + L-tryptophan + H2O. It participates in amino-acid biosynthesis; L-tryptophan biosynthesis; L-tryptophan from chorismate: step 5/5. Functionally, the beta subunit is responsible for the synthesis of L-tryptophan from indole and L-serine. The sequence is that of Tryptophan synthase beta chain from Pseudomonas fluorescens (strain Pf0-1).